The following is a 161-amino-acid chain: Nucleotide-binding protein RC1_3464 (161 aa).

Belongs to the YajQ family.

Functionally, nucleotide-binding protein. This is Nucleotide-binding protein RC1_3464 from Rhodospirillum centenum (strain ATCC 51521 / SW).